The sequence spans 506 residues: Nucleoside import ATP-binding protein NupA (506 aa).

ABC transporter domains lie at 7–242 (IQMI…VGRS) and 259–503 (LEIK…VGGN). 39–46 (GENGAGKS) provides a ligand contact to ATP.

The protein belongs to the ABC transporter superfamily. The complex is composed of two ATP-binding proteins (NupA), two transmembrane proteins (NupB and NupC) and a solute-binding protein (BmpA).

The protein resides in the cell membrane. Its function is as follows. Part of an ABC transporter complex involved in the uptake of all common nucleosides. Responsible for energy coupling to the transport system. This is Nucleoside import ATP-binding protein NupA from Lactococcus lactis subsp. cremoris (strain MG1363).